A 342-amino-acid polypeptide reads, in one-letter code: Probable dual-specificity RNA methyltransferase RlmN (342 aa).

Glutamate 91 serves as the catalytic Proton acceptor. The Radical SAM core domain maps to 97–326 (YRFGNTACVS…CTVRRELGSD (230 aa)). The cysteines at positions 104 and 331 are disulfide-linked. [4Fe-4S] cluster-binding residues include cysteine 111, cysteine 115, and cysteine 118. S-adenosyl-L-methionine is bound by residues 157–158 (GE), serine 189, 212–214 (SLH), and asparagine 288. Catalysis depends on cysteine 331, which acts as the S-methylcysteine intermediate.

Belongs to the radical SAM superfamily. RlmN family. The cofactor is [4Fe-4S] cluster.

The protein resides in the cytoplasm. The enzyme catalyses adenosine(2503) in 23S rRNA + 2 reduced [2Fe-2S]-[ferredoxin] + 2 S-adenosyl-L-methionine = 2-methyladenosine(2503) in 23S rRNA + 5'-deoxyadenosine + L-methionine + 2 oxidized [2Fe-2S]-[ferredoxin] + S-adenosyl-L-homocysteine. It catalyses the reaction adenosine(37) in tRNA + 2 reduced [2Fe-2S]-[ferredoxin] + 2 S-adenosyl-L-methionine = 2-methyladenosine(37) in tRNA + 5'-deoxyadenosine + L-methionine + 2 oxidized [2Fe-2S]-[ferredoxin] + S-adenosyl-L-homocysteine. Its function is as follows. Specifically methylates position 2 of adenine 2503 in 23S rRNA and position 2 of adenine 37 in tRNAs. The polypeptide is Probable dual-specificity RNA methyltransferase RlmN (Thermoanaerobacter pseudethanolicus (strain ATCC 33223 / 39E) (Clostridium thermohydrosulfuricum)).